Here is a 452-residue protein sequence, read N- to C-terminus: MAASSGRSQSSLHRKGLMAADRRSRILAVCGMHPDHQETLKKNRVVLAKQLLLSELLEHLLEKDIITLEMRELIQAKGGSFSQNVELLNLLPKRGPQAFDAFCEALRETRQGHLEDLLLTTLSDIQHILPPLSCDYDSSLPFSVCESCPPHKQSRLSTDTMEHSLDNGDGPPCLQVKPCTPEFYQAHYQLAYRLQSQPRGLALVMSNVHFTGEKDLEFRSGGDVDHTTLVTLFKLLGYNVHVLYDQTAQEMQEKLQNFAQLPAHRVTDSCIVALLSHGVEGGIYGVDGKLLQLQEVFRLFDNANCPSLQNKPKMFFIQACRGDETDRGVDQQDGKNHAQSPGCEESDAGKEELMKMRLPTRSDMICGYACLKGNAAMRNTKRGSWYIEALTQVFSERACDMHVADMLVKVNALIKEREGYAPGTEFHRCKEMSEYCSTLCQQLYLFPGYPPT.

N-acetylalanine is present on A2. Positions A2–D169 are excised as a propeptide. Residues M32–T121 form the CARD domain. Residue S157 is modified to Phosphoserine. Active-site residues include H277 and C320. Positions D326–D333 are excised as a propeptide. The span at R327–N336 shows a compositional bias: basic and acidic residues. Residues R327–G349 are disordered. S340 carries the phosphoserine modification.

This sequence belongs to the peptidase C14A family. In terms of assembly, heterotetramer that consists of two anti-parallel arranged heterodimers, each one formed by a p18 subunit and a p12 subunit. Forms a complex named the PIDDosome with PIDD1 and CRADD. Interacts with NOL3 (via CARD domain); inhibits CASP2 activity in a phosphorylation-dependent manner. In terms of processing, the mature protease can process its own propeptide, but not that of other caspases.

It carries out the reaction Strict requirement for an Asp residue at P1, with 316-Asp being essential for proteolytic activity and has a preferred cleavage sequence of Val-Asp-Val-Ala-Asp-|-.. Involved in the activation cascade of caspases responsible for apoptosis execution. Might function by either activating some proteins required for cell death or inactivating proteins necessary for cell survival. Associates with PIDD1 and CRADD to form the PIDDosome, a complex that activates CASP2 and triggers apoptosis in response to genotoxic stress. In Rattus norvegicus (Rat), this protein is Caspase-2 (Casp2).